Here is a 250-residue protein sequence, read N- to C-terminus: 1-(5-phosphoribosyl)-5-[(5-phosphoribosylamino)methylideneamino] imidazole-4-carboxamide isomerase (250 aa).

Residue Asp10 is the Proton acceptor of the active site. The active-site Proton donor is the Asp131.

The protein belongs to the HisA/HisF family.

It is found in the cytoplasm. The enzyme catalyses 1-(5-phospho-beta-D-ribosyl)-5-[(5-phospho-beta-D-ribosylamino)methylideneamino]imidazole-4-carboxamide = 5-[(5-phospho-1-deoxy-D-ribulos-1-ylimino)methylamino]-1-(5-phospho-beta-D-ribosyl)imidazole-4-carboxamide. The protein operates within amino-acid biosynthesis; L-histidine biosynthesis; L-histidine from 5-phospho-alpha-D-ribose 1-diphosphate: step 4/9. This chain is 1-(5-phosphoribosyl)-5-[(5-phosphoribosylamino)methylideneamino] imidazole-4-carboxamide isomerase, found in Desulfitobacterium hafniense (strain DSM 10664 / DCB-2).